A 241-amino-acid chain; its full sequence is 3-oxoacyl-[acyl-carrier-protein] reductase FabG (241 aa).

Residues glycine 13 to serine 16, serine 38, glutamate 57 to valine 58, and asparagine 83 each bind NADP(+). Serine 135 provides a ligand contact to substrate. Tyrosine 148 acts as the Proton acceptor in catalysis. Residues tyrosine 148–lysine 152 and isoleucine 181 contribute to the NADP(+) site.

This sequence belongs to the short-chain dehydrogenases/reductases (SDR) family. Homotetramer.

The enzyme catalyses a (3R)-hydroxyacyl-[ACP] + NADP(+) = a 3-oxoacyl-[ACP] + NADPH + H(+). It participates in lipid metabolism; fatty acid biosynthesis. In terms of biological role, catalyzes the NADPH-dependent reduction of beta-ketoacyl-ACP substrates to beta-hydroxyacyl-ACP products, the first reductive step in the elongation cycle of fatty acid biosynthesis. The chain is 3-oxoacyl-[acyl-carrier-protein] reductase FabG (fabG) from Rickettsia prowazekii (strain Madrid E).